The primary structure comprises 209 residues: Homeobox protein ceh-2 (209 aa).

The span at 1–14 shows a compositional bias: basic and acidic residues; it reads MTLKFSVERLVDSE. Disordered regions lie at residues 1 to 46 and 181 to 209; these read MTLK…KSGK and HKRV…KSVS. Residues 15–24 are compositionally biased toward acidic residues; that stretch reads KESEEADVEE. The homeobox DNA-binding region spans 126–185; that stretch reads NKRIRTAFSASQLIQLEKAFEGNHYVVGNERKQLAAKLSLTETQVKVWFQNRRTKHKRVR.

Belongs to the EMX homeobox family. As to expression, in the anterior pharynx, expressed in the I3 interneuron, the NSM and M3 motor neuron pairs, the three m2 muscle cells and the three e2 epithelial cells (at protein level).

The protein localises to the nucleus. Its function is as follows. Required for activity of the M3 pharyngeal motor neuron. The protein is Homeobox protein ceh-2 of Caenorhabditis elegans.